The sequence spans 372 residues: MTSIEPTHTGKKVIVGMSGGVDSSVSAYLLMQQGYQVEGLFMKNWEEDDNNEYCAAAEDLKDAQAVCDKLGIKLHTVNFAAEYWDNVFEYFLAEYKAGRTPNPDIMCNKEIKFKAFLEFADEILDADYIAMGHYVRRRDNSDGSTQMLRGVDGNKDQSYFLYTLSHEQVARSLFPVGELEKHEVREIAKEMGLITHDKKDSTGICFIGERKFTEFLGTYLPAQPGNIETPEGEVIGTHQGLMYHTLGQRKGLGIGGMKNSNDDPWYVVDKDLERNVLIVGQGGHHPRLMSTGMTVNQLHWVDRTGPVDGCHIAVKTRYRQQDVPCTLTYTDEHTLGVVFDEPVAAVTPGQSAVFYDGEVCLGGGIIDQLIRG.

Residues 16-23 (GMSGGVDS) and methionine 42 contribute to the ATP site. An interaction with target base in tRNA region spans residues 102–104 (NPD). Cysteine 107 (nucleophile) is an active-site residue. Cysteines 107 and 205 form a disulfide. Residue glycine 132 coordinates ATP. Residues 155-157 (KDQ) form an interaction with tRNA region. Cysteine 205 acts as the Cysteine persulfide intermediate in catalysis. Residues 317–318 (RY) form an interaction with tRNA region.

Belongs to the MnmA/TRMU family.

It localises to the cytoplasm. The enzyme catalyses S-sulfanyl-L-cysteinyl-[protein] + uridine(34) in tRNA + AH2 + ATP = 2-thiouridine(34) in tRNA + L-cysteinyl-[protein] + A + AMP + diphosphate + H(+). In terms of biological role, catalyzes the 2-thiolation of uridine at the wobble position (U34) of tRNA, leading to the formation of s(2)U34. The sequence is that of tRNA-specific 2-thiouridylase MnmA from Shewanella baltica (strain OS223).